Here is a 493-residue protein sequence, read N- to C-terminus: Phospholipid transfer protein (493 aa).

The signal sequence occupies residues 1–17 (MALFGALFLALLAGAHA). The N-linked (GlcNAc...) (complex) asparagine glycan is linked to Asn64. The N-linked (GlcNAc...) asparagine glycan is linked to Asn94. A glycan (N-linked (GlcNAc...) (complex) asparagine) is linked at Asn117. N-linked (GlcNAc...) asparagine glycosylation occurs at Asn143. Cysteines 146 and 185 form a disulfide. The N-linked (GlcNAc...) (complex) asparagine glycan is linked to Asn245. A glycan (N-linked (GlcNAc...) asparagine) is linked at Asn398.

It belongs to the BPI/LBP/Plunc superfamily. BPI/LBP family. Post-translationally, glycosylation is necessary for secretion and its phospholipid transfer activity. In terms of tissue distribution, widely expressed. Highest level of expression in the ovary, thymus and placenta, with moderate levels found in the pancreas, small intestine, testis, lung and prostrate. Low level expression in the kidney, liver and spleen, with very low levels found in the heart, colon, skeletal muscle, leukocytes and brain. Expressed in the cortical neurons.

It localises to the secreted. The protein resides in the nucleus. It carries out the reaction a 1,2-diacyl-sn-glycero-3-phosphocholine(in) = a 1,2-diacyl-sn-glycero-3-phosphocholine(out). It catalyses the reaction a 1,2-diacyl-sn-glycero-3-phosphoethanolamine(in) = a 1,2-diacyl-sn-glycero-3-phosphoethanolamine(out). The enzyme catalyses a 1,2-diacyl-sn-glycerol(in) = a 1,2-diacyl-sn-glycerol(out). The catalysed reaction is a 1,2-diacyl-sn-glycero-3-phosphate(in) = a 1,2-diacyl-sn-glycero-3-phosphate(out). It carries out the reaction a sphingomyelin(in) = a sphingomyelin(out). It catalyses the reaction a 1,2-diacyl-sn-glycero-3-phospho-(1'-sn-glycerol)(in) = a 1,2-diacyl-sn-glycero-3-phospho-(1'-sn-glycerol)(out). The enzyme catalyses a 1,2-diacyl-sn-glycero-3-phospho-(1D-myo-inositol)(in) = a 1,2-diacyl-sn-glycero-3-phospho-(1D-myo-inositol)(out). The catalysed reaction is 1-hexadecanoyl-2-(5Z,8Z,11Z,14Z-eicosatetraenoyl)-sn-glycero-3-phosphoethanolamine(in) = 1-hexadecanoyl-2-(5Z,8Z,11Z,14Z-eicosatetraenoyl)-sn-glycero-3-phosphoethanolamine(out). It carries out the reaction N-(hexadecanoyl)-sphing-4-enine-1-phosphocholine(in) = N-(hexadecanoyl)-sphing-4-enine-1-phosphocholine(out). It catalyses the reaction 1,2-dihexadecanoyl-sn-glycero-3-phosphocholine(in) = 1,2-dihexadecanoyl-sn-glycero-3-phosphocholine(out). In terms of biological role, mediates the transfer of phospholipids and free cholesterol from triglyceride-rich lipoproteins (low density lipoproteins or LDL and very low density lipoproteins or VLDL) into high-density lipoproteins (HDL) as well as the exchange of phospholipids between triglyceride-rich lipoproteins themselves. Facilitates the transfer of a spectrum of different lipid molecules, including diacylglycerol, phosphatidic acid, sphingomyelin, phosphatidylcholine, phosphatidylinositol, phosphatidylglycerol, cerebroside and phosphatidyl ethanolamine. Plays an important role in HDL remodeling which involves modulating the size and composition of HDL. Also plays a key role in the uptake of cholesterol from peripheral cells and tissues that is subsequently transported to the liver for degradation and excretion. Two distinct forms of PLTP exist in plasma: an active form that can transfer phosphatidylcholine from phospholipid vesicles to HDL, and an inactive form that lacks this capability. In Homo sapiens (Human), this protein is Phospholipid transfer protein (PLTP).